Reading from the N-terminus, the 771-residue chain is DNA polymerase 1 (771 aa).

This sequence belongs to the DNA polymerase type-B family.

It catalyses the reaction DNA(n) + a 2'-deoxyribonucleoside 5'-triphosphate = DNA(n+1) + diphosphate. The chain is DNA polymerase 1 (polI) from Pyrococcus abyssi.